We begin with the raw amino-acid sequence, 87 residues long: Small ribosomal subunit protein bS20 (87 aa).

Over residues 1–19 the composition is skewed to basic residues; the sequence is MANHKSALKRHRQSIKRNL. The interval 1 to 22 is disordered; that stretch reads MANHKSALKRHRQSIKRNLRNN.

The protein belongs to the bacterial ribosomal protein bS20 family.

Its function is as follows. Binds directly to 16S ribosomal RNA. This is Small ribosomal subunit protein bS20 from Maridesulfovibrio salexigens (strain ATCC 14822 / DSM 2638 / NCIMB 8403 / VKM B-1763) (Desulfovibrio salexigens).